A 516-amino-acid chain; its full sequence is GMP synthase [glutamine-hydrolyzing] (516 aa).

A Glutamine amidotransferase type-1 domain is found at 7 to 199 (KIIILDFGSQ…VFGLCKCQAT (193 aa)). The active-site Nucleophile is Cys84. Active-site residues include His173 and Glu175. The GMPS ATP-PPase domain occupies 200–391 (WTMQGFIESN…LGLPDEAVHR (192 aa)). 227-233 (SGGVDSS) serves as a coordination point for ATP.

In terms of assembly, homodimer.

It carries out the reaction XMP + L-glutamine + ATP + H2O = GMP + L-glutamate + AMP + diphosphate + 2 H(+). It participates in purine metabolism; GMP biosynthesis; GMP from XMP (L-Gln route): step 1/1. In terms of biological role, catalyzes the synthesis of GMP from XMP. The protein is GMP synthase [glutamine-hydrolyzing] of Desulfotalea psychrophila (strain LSv54 / DSM 12343).